Reading from the N-terminus, the 332-residue chain is MKPSDARHIPVLGPEAVGLLAPRAGGIYVDGTFGAGGYTRLILETAGSRVIAIDRDPSAIAGGADLVTEAGGRLTLVQDRFSNLADVCAAQGAATVDGVVMDIGVSSMQLDQAERGFSFRFDGPLDMRMGRDGPSAADVVARASETDLANIIYIFGEERYSRHVARAIVAARSETPITTTKALADIVAKVVRAKPGEIHPATRTFQGLRIFVNEELDELHQALDAAERVLKPSGRLAVVSFHSLEDRIVKTFLAERSKTGGGSRHLPEVAQAAPSFTLLSKRPIVAGDAEVAANPRARSAKLRGAERTESPAHAAGDLPGWPTLASVMRAGR.

S-adenosyl-L-methionine-binding positions include 36-38 (GGY), Asp-54, Phe-81, Asp-102, and Gln-109. A disordered region spans residues 295–322 (PRARSAKLRGAERTESPAHAAGDLPGWP).

Belongs to the methyltransferase superfamily. RsmH family.

It localises to the cytoplasm. It carries out the reaction cytidine(1402) in 16S rRNA + S-adenosyl-L-methionine = N(4)-methylcytidine(1402) in 16S rRNA + S-adenosyl-L-homocysteine + H(+). In terms of biological role, specifically methylates the N4 position of cytidine in position 1402 (C1402) of 16S rRNA. In Rhodopseudomonas palustris (strain ATCC BAA-98 / CGA009), this protein is Ribosomal RNA small subunit methyltransferase H.